Reading from the N-terminus, the 299-residue chain is ATP phosphoribosyltransferase (299 aa).

It belongs to the ATP phosphoribosyltransferase family. Long subfamily. Mg(2+) is required as a cofactor.

The protein resides in the cytoplasm. The enzyme catalyses 1-(5-phospho-beta-D-ribosyl)-ATP + diphosphate = 5-phospho-alpha-D-ribose 1-diphosphate + ATP. Its pathway is amino-acid biosynthesis; L-histidine biosynthesis; L-histidine from 5-phospho-alpha-D-ribose 1-diphosphate: step 1/9. Feedback inhibited by histidine. Functionally, catalyzes the condensation of ATP and 5-phosphoribose 1-diphosphate to form N'-(5'-phosphoribosyl)-ATP (PR-ATP). Has a crucial role in the pathway because the rate of histidine biosynthesis seems to be controlled primarily by regulation of HisG enzymatic activity. The chain is ATP phosphoribosyltransferase from Campylobacter lari (strain RM2100 / D67 / ATCC BAA-1060).